Reading from the N-terminus, the 142-residue chain is Large ribosomal subunit protein uL13 (142 aa).

This sequence belongs to the universal ribosomal protein uL13 family. As to quaternary structure, part of the 50S ribosomal subunit.

In terms of biological role, this protein is one of the early assembly proteins of the 50S ribosomal subunit, although it is not seen to bind rRNA by itself. It is important during the early stages of 50S assembly. In Psychrobacter cryohalolentis (strain ATCC BAA-1226 / DSM 17306 / VKM B-2378 / K5), this protein is Large ribosomal subunit protein uL13.